The chain runs to 190 residues: Glycine cleavage system transcriptional repressor (190 aa).

ACT domains are found at residues 10 to 91 and 97 to 176; these read VITA…PRPP and WVQV…GSIN.

It localises to the cytoplasm. Negative transcriptional regulator of the glycine cleavage system operon (GCV). Does not autoregulate its own expression. It is not yet known how GcvR acts as a repressor. It does not seem to bind DNA. It could interact with GcvA and suppress its activatory activity. The sequence is that of Glycine cleavage system transcriptional repressor (gcvR) from Escherichia coli (strain K12).